The sequence spans 257 residues: Thioredoxin-dependent peroxide reductase, mitochondrial (257 aa).

The N-terminal 62 residues, 1–62 (MAAAAGRLLW…SAFSTSSSFH (62 aa)), are a transit peptide targeting the mitochondrion. The Thioredoxin domain occupies 64-222 (PAVTQHAPYF…TLRLVKAFQF (159 aa)). Lys-84 carries the post-translational modification N6-succinyllysine. N6-acetyllysine; alternate is present on Lys-92. Lys-92 is subject to N6-succinyllysine; alternate. Cys-109 (cysteine sulfenic acid (-SOH) intermediate) is an active-site residue. Thr-147 carries the phosphothreonine modification.

Belongs to the peroxiredoxin family. AhpC/Prx1 subfamily. As to quaternary structure, homodimer; disulfide-linked, upon oxidation. 6 homodimers assemble to form a ring-like dodecamer. Interacts with NEK6. Interacts with LRRK2. Interacts with MAP3K13. Interacts with RPS6KC1 (via PX domain). Phosphorylated by LRRK2; phosphorylation reduces perodixase activity. Post-translationally, the enzyme can be inactivated by further oxidation of the cysteine sulfenic acid (C(P)-SOH) to sulphinic acid (C(P)-SO2H) and sulphonic acid (C(P)-SO3H) instead of its condensation to a disulfide bond. In terms of processing, S-palmitoylated. As to expression, housekeeping-type gene preferentially expressed in murine erythroleukemia (MEL) cells.

It localises to the mitochondrion. It is found in the cytoplasm. The protein localises to the early endosome. It catalyses the reaction a hydroperoxide + [thioredoxin]-dithiol = an alcohol + [thioredoxin]-disulfide + H2O. Its function is as follows. Thiol-specific peroxidase that catalyzes the reduction of hydrogen peroxide and organic hydroperoxides to water and alcohols, respectively. Plays a role in cell protection against oxidative stress by detoxifying peroxides. Acts synergistically with MAP3K13 to regulate the activation of NF-kappa-B in the cytosol. Required for the maintenance of physical strength. The protein is Thioredoxin-dependent peroxide reductase, mitochondrial (Prdx3) of Mus musculus (Mouse).